The primary structure comprises 229 residues: MAAAQPESRDGAAQSAKPASETDPLSRFTCPVCLEVFEKPVQVPCGHVFCSACLQECLKPKKPVCGVCRSALAPGVRAVELERQIESIETSCHGCRKNFILSKIRAHVTSCSKYQNYIMEGVKATTKDASLQPRNIPNRYTFPCPYCPEKNFDQEGLVEHCKLTHSTDTKSVVCPICASMPWGDPSYRSANFMEHIQRRHRFSYDTFVDYDVDEDDMINQVLQRSIIDQ.

Residues 1–23 (MAAAQPESRDGAAQSAKPASETD) form a disordered region. The segment at 30–69 (CPVCLEVFEKPVQVPCGHVFCSACLQECLKPKKPVCGVCR) adopts an RING-type zinc-finger fold. Residues Cys-92 and Cys-95 each coordinate Zn(2+). Residues 92–111 (CHGCRKNFILSKIRAHVTSC) form a C2HC RNF-type zinc finger. Position 103 is an N6-acetyllysine (Lys-103). Residues His-107 and Cys-111 each coordinate Zn(2+). Lys-113 carries the post-translational modification N6-acetyllysine.

In terms of assembly, interacts with XAF1, the interaction increases XAF1 stability and proapoptotic effects, and may regulate IFN signaling. Autoubiquitinated. Polyubiquitinated in the presence of E2 enzymes UBE2D1, UBE2D2 and UBE2D3, but only monoubiquitinated in the presence of UBE2E1.

The protein resides in the cytoplasm. The protein localises to the nucleus. It carries out the reaction S-ubiquitinyl-[E2 ubiquitin-conjugating enzyme]-L-cysteine + [acceptor protein]-L-lysine = [E2 ubiquitin-conjugating enzyme]-L-cysteine + N(6)-ubiquitinyl-[acceptor protein]-L-lysine.. Its pathway is protein modification; protein ubiquitination. E3 ubiquitin-protein ligase that promotes the ubiquitination of various substrates. In turn, participates in the regulation of many biological processes including cell cycle, apoptosis, osteoclastogenesis as well as innate or adaptive immunity. Acts as negative regulator of NF-kappa-B-dependent transcription by promoting the ubiquitination and stabilization of the NF-kappa-B inhibitor TNFAIP3. May promote the ubiquitination of TRAF6 as well. Also acts as a negative regulator of T-cell activation. Inhibits cellular dsRNA responses and interferon production by targeting MAVS component for proteasomal degradation. Ubiquitinates the CDK inhibitor CDKN1A leading to its degradationand probably also CDKN1B and CDKN1C. This activity stimulates cell cycle G1-to-S phase transition and suppresses cellular senescence. May play a role in spermatogenesis. The polypeptide is E3 ubiquitin-protein ligase RNF114 (Rnf114) (Mus musculus (Mouse)).